The sequence spans 90 residues: Genome polyprotein (90 aa).

Belongs to the potyviridae genome polyprotein family. Genome polyprotein of potyviruses undergoes post-translational proteolytic processing by the main proteinase NIa-pro resulting in the production of at least ten individual proteins. The P1 proteinase and the HC-pro cleave only their respective C-termini autocatalytically. 6K1 is essential for proper proteolytic separation of P3 from CI.

The protein resides in the virion. Involved in aphid transmission, cell-to-cell and systemis movement, encapsidation of the viral RNA and in the regulation of viral RNA amplification. The polypeptide is Genome polyprotein (Gloriosa stripe mosaic virus (GSMV)).